Consider the following 366-residue polypeptide: tRNA/tmRNA (uracil-C(5))-methyltransferase (366 aa).

S-adenosyl-L-methionine contacts are provided by glutamine 190, tyrosine 218, asparagine 223, glutamate 239, and aspartate 299. The active-site Nucleophile is the cysteine 324. Glutamate 358 acts as the Proton acceptor in catalysis.

It belongs to the class I-like SAM-binding methyltransferase superfamily. RNA M5U methyltransferase family. TrmA subfamily.

It carries out the reaction uridine(54) in tRNA + S-adenosyl-L-methionine = 5-methyluridine(54) in tRNA + S-adenosyl-L-homocysteine + H(+). The enzyme catalyses uridine(341) in tmRNA + S-adenosyl-L-methionine = 5-methyluridine(341) in tmRNA + S-adenosyl-L-homocysteine + H(+). In terms of biological role, dual-specificity methyltransferase that catalyzes the formation of 5-methyluridine at position 54 (m5U54) in all tRNAs, and that of position 341 (m5U341) in tmRNA (transfer-mRNA). This is tRNA/tmRNA (uracil-C(5))-methyltransferase from Salmonella arizonae (strain ATCC BAA-731 / CDC346-86 / RSK2980).